Consider the following 245-residue polypeptide: Ribonuclease 3 (245 aa).

An RNase III domain is found at 24 to 146 (YTVFSQKLGY…IIGAIYLESG (123 aa)). Position 59 (E59) interacts with Mg(2+). Residue D63 is part of the active site. Residues N132 and E135 each contribute to the Mg(2+) site. Residue E135 is part of the active site. The DRBM domain maps to 173–243 (DPKTLLQEYL…ARRAYKLAVV (71 aa)).

Belongs to the ribonuclease III family. Homodimer. Requires Mg(2+) as cofactor.

The protein localises to the cytoplasm. It carries out the reaction Endonucleolytic cleavage to 5'-phosphomonoester.. Digests double-stranded RNA. Involved in the processing of primary rRNA transcript to yield the immediate precursors to the large and small rRNAs (23S and 16S). Processes some mRNAs, and tRNAs when they are encoded in the rRNA operon. Processes pre-crRNA and tracrRNA of type II CRISPR loci if present in the organism. The polypeptide is Ribonuclease 3 (Nitrosomonas eutropha (strain DSM 101675 / C91 / Nm57)).